The chain runs to 247 residues: 2,3-bisphosphoglycerate-dependent phosphoglycerate mutase (247 aa).

Residues 8-15 (RHGESTWN), 21-22 (TG), R60, 87-90 (ERHY), K98, 114-115 (RR), and 183-184 (GN) each bind substrate. H9 acts as the Tele-phosphohistidine intermediate in catalysis. Catalysis depends on E87, which acts as the Proton donor/acceptor.

Belongs to the phosphoglycerate mutase family. BPG-dependent PGAM subfamily. Homodimer.

It carries out the reaction (2R)-2-phosphoglycerate = (2R)-3-phosphoglycerate. It functions in the pathway carbohydrate degradation; glycolysis; pyruvate from D-glyceraldehyde 3-phosphate: step 3/5. Catalyzes the interconversion of 2-phosphoglycerate and 3-phosphoglycerate. This is 2,3-bisphosphoglycerate-dependent phosphoglycerate mutase from Acidovorax sp. (strain JS42).